A 412-amino-acid polypeptide reads, in one-letter code: Gamma-glutamyl phosphate reductase (412 aa).

It belongs to the gamma-glutamyl phosphate reductase family.

It localises to the cytoplasm. It catalyses the reaction L-glutamate 5-semialdehyde + phosphate + NADP(+) = L-glutamyl 5-phosphate + NADPH + H(+). It participates in amino-acid biosynthesis; L-proline biosynthesis; L-glutamate 5-semialdehyde from L-glutamate: step 2/2. Catalyzes the NADPH-dependent reduction of L-glutamate 5-phosphate into L-glutamate 5-semialdehyde and phosphate. The product spontaneously undergoes cyclization to form 1-pyrroline-5-carboxylate. The sequence is that of Gamma-glutamyl phosphate reductase from Lactiplantibacillus plantarum (strain ATCC BAA-793 / NCIMB 8826 / WCFS1) (Lactobacillus plantarum).